Reading from the N-terminus, the 2148-residue chain is Polyketide synthase 1 (2148 aa).

Residues 19 to 261 are N-terminal acylcarrier protein transacylase domain (SAT); that stretch reads FIFGDQSSCN…TPLAVHAPYH (243 aa). The Ketosynthase family 3 (KS3) domain maps to 394 to 829; it reads ESKIAIIGMS…GGNTALLVED (436 aa). Catalysis depends on for beta-ketoacyl synthase activity residues Cys-566, His-701, and His-745. The tract at residues 930–1236 is malonyl-CoA:ACP transacylase (MAT) domain; it reads FVFSGQGSQY…MRNKDGWQVL (307 aa). Residue Ser-1018 is the For acyl/malonyl transferase activity of the active site. Residues 1310-1624 are product template (PT) domain; sequence TASVHRMVHE…RKVLNTAMPP (315 aa). The segment at 1314–1447 is N-terminal hotdog fold; that stretch reads HRMVHESVEK…SSLHFEQPKV (134 aa). One can recognise a PKS/mFAS DH domain in the interval 1314 to 1619; the sequence is HRMVHESVEK…FQGIPRKVLN (306 aa). His-1346 serves as the catalytic Proton acceptor; for dehydratase activity. The tract at residues 1474–1619 is C-terminal hotdog fold; that stretch reads LNSRMSSGVI…FQGIPRKVLN (146 aa). The active-site Proton donor; for dehydratase activity is the Asp-1533. Positions 1619–1655 are disordered; that stretch reads NTAMPPPKSQNEAPVRSGPAKPAAKPPRSASSEHSGH. Residues 1634–1650 show a composition bias toward low complexity; sequence RSGPAKPAAKPPRSASS. The region spanning 1678-1752 is the Carrier 1 domain; sequence RNPMLPVFKI…DLAAQLGLDT (75 aa). An O-(pantetheine 4'-phosphoryl)serine modification is found at Ser-1712. Positions 1755–1790 are enriched in low complexity; that stretch reads SDQSSGQSSSSGGLSPRSDSIGEITSSVTTPPSLSP. A disordered region spans residues 1755 to 1796; it reads SDQSSGQSSSSGGLSPRSDSIGEITSSVTTPPSLSPRGSVSG. Residues 1793–1870 enclose the Carrier 2 domain; the sequence is SVSGSQCKDV…SFKHMFQQGH (78 aa). Ser-1830 carries the O-(pantetheine 4'-phosphoryl)serine modification. The segment at 1882–2146 is thioesterase (TE) domain; it reads LKQYRATSTL…ERVAAFIRST (265 aa). The For thioesterase activity role is filled by Ser-1973.

It participates in pigment biosynthesis. Its function is as follows. Polyketide synthase; part of the Pks1 gene cluster that mediates the biosynthesis of an anthraquinone derivative pigment that contributes to conidial pigmentation that provides protection from UV radiation, heat and cold stress. The polyketide synthase Pks1 produces 1-acetyl-2,4,6,8-tetrahydroxy-9,10-anthraquinone though condensation of acetyl-CoA with malonyl-CoA. The dehydratase EthD and the laccase Mlac1 further convert the anthraquinone derivative into the final conidial pigment. This chain is Polyketide synthase 1, found in Metarhizium robertsii (strain ARSEF 23 / ATCC MYA-3075) (Metarhizium anisopliae (strain ARSEF 23)).